A 237-amino-acid polypeptide reads, in one-letter code: NAD(P)H-quinone oxidoreductase subunit K (237 aa).

Residues Cys52, Cys53, Cys117, and Cys148 each contribute to the [4Fe-4S] cluster site.

It belongs to the complex I 20 kDa subunit family. As to quaternary structure, NDH-1 can be composed of about 15 different subunits; different subcomplexes with different compositions have been identified which probably have different functions. The cofactor is [4Fe-4S] cluster.

It localises to the cellular thylakoid membrane. It catalyses the reaction a plastoquinone + NADH + (n+1) H(+)(in) = a plastoquinol + NAD(+) + n H(+)(out). It carries out the reaction a plastoquinone + NADPH + (n+1) H(+)(in) = a plastoquinol + NADP(+) + n H(+)(out). Functionally, NDH-1 shuttles electrons from an unknown electron donor, via FMN and iron-sulfur (Fe-S) centers, to quinones in the respiratory and/or the photosynthetic chain. The immediate electron acceptor for the enzyme in this species is believed to be plastoquinone. Couples the redox reaction to proton translocation, and thus conserves the redox energy in a proton gradient. Cyanobacterial NDH-1 also plays a role in inorganic carbon-concentration. In Thermosynechococcus vestitus (strain NIES-2133 / IAM M-273 / BP-1), this protein is NAD(P)H-quinone oxidoreductase subunit K.